The primary structure comprises 219 residues: Large ribosomal subunit protein uL3 (219 aa).

A disordered region spans residues 140–163 (SASHGAHRNHRKPGSIGASSTPSR).

It belongs to the universal ribosomal protein uL3 family. In terms of assembly, part of the 50S ribosomal subunit. Forms a cluster with proteins L14 and L19.

Functionally, one of the primary rRNA binding proteins, it binds directly near the 3'-end of the 23S rRNA, where it nucleates assembly of the 50S subunit. The chain is Large ribosomal subunit protein uL3 from Leifsonia xyli subsp. xyli (strain CTCB07).